Here is a 176-residue protein sequence, read N- to C-terminus: Interleukin-20 (176 aa).

A signal peptide spans 1 to 24 (MKGFGLAFGLFSAVGFLLWTPLTG). Disulfide bonds link C33/C126, C80/C132, and C81/C134.

It belongs to the IL-10 family. Forms a 1:1:1 heterotrimeric complex with its primary high-affinity heterodimeric receptor IL20RA/IL20RB.

It is found in the secreted. Functionally, pro-inflammatory and angiogenic cytokine mainly secreted by monocytes and skin keratinocytes that plays crucial roles in immune responses, regulation of inflammatory responses, hemopoiesis, as well as epidermal cell and keratinocyte differentiation. Enhances tissue remodeling and wound-healing activities and restores the homeostasis of epithelial layers during infection and inflammatory responses to maintain tissue integrity. Affects multiple actin-mediated functions in activated neutrophils leading to inhibition of phagocytosis, granule exocytosis, and migration. Exert its effects via the type I IL-20 receptor complex consisting of IL20RA and IL20RB. Alternatively, can mediate its activity through a second receptor complex called type II IL-20 receptor complex composed of IL22RA1 and IL20RB. Acts as an arteriogenic and vascular remodeling factory by activating a range of signaling processes including phosphorylations of JAK2 and STAT5 as well as activation of the serine and threonine kinases AKT and ERK1/2. Alternatively, can activate STAT3 phosphorylation and transcriptional activity in a JAK2, ERK1/2 and p38 MAPK-dependent manner in keratinocytes. The protein is Interleukin-20 (Il20) of Mus musculus (Mouse).